Reading from the N-terminus, the 186-residue chain is Tumor necrosis factor alpha-induced protein 8-like protein 1 (186 aa).

It belongs to the TNFAIP8 family. In terms of assembly, interacts with FBXW5; TNFAIP8L1 competes with TSC2 to bind FBXW5 increasing TSC2 stability by preventing its ubiquitination. High expression detected in most carcinoma cell lines, especially in cells transformed with virus genomes.

It is found in the cytoplasm. Acts as a negative regulator of mTOR activity. The polypeptide is Tumor necrosis factor alpha-induced protein 8-like protein 1 (TNFAIP8L1) (Homo sapiens (Human)).